The sequence spans 216 residues: Glutathione S-transferase D5 (216 aa).

A GST N-terminal domain is found at 1–80; it reads MDFYYSPRGS…YLVEKYGKDD (80 aa). Residues 50-52 and 64-66 each bind glutathione; these read HTI and ESR. Residues 86–207 form the GST C-terminal domain; the sequence is DPKKQALVNQ…KGAVELKGVF (122 aa).

The protein belongs to the GST superfamily. Delta family. Homodimer.

The catalysed reaction is RX + glutathione = an S-substituted glutathione + a halide anion + H(+). Functionally, conjugation of reduced glutathione to a wide number of exogenous and endogenous hydrophobic electrophiles. May be involved in detoxification. This is Glutathione S-transferase D5 from Drosophila melanogaster (Fruit fly).